The sequence spans 306 residues: Agmatinase (306 aa).

6 residues coordinate Mn(2+): His128, Asp151, His153, Asp155, Asp232, and Asp234.

This sequence belongs to the arginase family. Agmatinase subfamily. It depends on Mn(2+) as a cofactor.

The enzyme catalyses agmatine + H2O = urea + putrescine. The protein operates within amine and polyamine biosynthesis; putrescine biosynthesis via agmatine pathway; putrescine from agmatine: step 1/1. Catalyzes the formation of putrescine from agmatine. This chain is Agmatinase (speB), found in Proteus mirabilis.